The following is a 116-amino-acid chain: U16-barytoxin-Tl1d (116 aa).

Residues Met1–Ala20 form the signal peptide. A propeptide spanning residues Asn21–Arg74 is cleaved from the precursor. Cystine bridges form between Cys75-Cys90, Cys82-Cys95, and Cys89-Cys110.

The protein belongs to the neurotoxin 14 (magi-1) family. 06 (ICK-Trit) subfamily. Expressed by the venom gland.

It is found in the secreted. Functionally, ion channel inhibitor. The protein is U16-barytoxin-Tl1d of Trittame loki (Brush-footed trapdoor spider).